The following is a 315-amino-acid chain: MRMSFGLTFKRTAKVHWRANFSQQCSLRSTGLFVPPSPPLDPEKVKELQRFITLSKRLLVMTGAGISTESGIPDYRSEKVGLYARTDRRPIQHGDFVRSAPVRQRYWARNFVGWPQFSSRQPNPAHWALSNWERLGKLHWLVTQNVDALHTKAGSQRLTELHGCMHRVLCLDCGEQTPRGVLQERFQVLNPTWSAEAHGLAPDGDVFLTEEEVQSFQVPSCSRCGGPLKPDVVFFGDTVKPDKVDFVHKRVKEADSLLVVGSSLQVYSGYRFILTAREKKLPIVILNIGPTRSDDLASLKLDSRCGELLPLIDPR.

Residues 1–29 (MRMSFGLTFKRTAKVHWRANFSQQCSLRS) constitute a mitochondrion transit peptide. Positions 38 to 315 (PPLDPEKVKE…GELLPLIDPR (278 aa)) constitute a Deacetylase sirtuin-type domain. NAD(+) contacts are provided by residues 63-83 (GAGI…VGLY) and 144-147 (QNVD). His162 (proton acceptor) is an active-site residue. Zn(2+) contacts are provided by Cys170, Cys173, Cys221, and Cys224. NAD(+) contacts are provided by residues 261–263 (GSS), 287–289 (NIG), and Cys305.

It belongs to the sirtuin family. Class II subfamily. In terms of assembly, interacts with GLUD1, IDE and SLC25A5. Interacts with DLAT and PDHX. Interacts with MCCC1 (via the biotin carboxylation domain). Interacts with PCCA and PC. Zn(2+) serves as cofactor.

Its subcellular location is the mitochondrion matrix. It carries out the reaction N(6)-[(R)-lipoyl]-L-lysyl-[protein] + NAD(+) + H2O = 2''-O-lipoyl-ADP-D-ribose + nicotinamide + L-lysyl-[protein]. It catalyses the reaction N(6)-biotinyl-L-lysyl-[protein] + NAD(+) + H2O = 2''-O-biotinyl-ADP-D-ribose + nicotinamide + L-lysyl-[protein]. The enzyme catalyses N(6)-acetyl-L-lysyl-[protein] + NAD(+) + H2O = 2''-O-acetyl-ADP-D-ribose + nicotinamide + L-lysyl-[protein]. The catalysed reaction is L-cysteinyl-[protein] + NAD(+) = S-(ADP-D-ribosyl)-L-cysteinyl-[protein] + nicotinamide + H(+). Acts as a NAD-dependent protein lipoamidase, biotinylase, deacetylase and ADP-ribosyl transferase. Catalyzes more efficiently removal of lipoyl- and biotinyl- than acetyl-lysine modifications. Inhibits the pyruvate dehydrogenase complex (PDH) activity via the enzymatic hydrolysis of the lipoamide cofactor from the E2 component, DLAT, in a phosphorylation-independent manner. Catalyzes the transfer of ADP-ribosyl groups onto target proteins, including mitochondrial GLUD1, inhibiting GLUD1 enzyme activity. Acts as a negative regulator of mitochondrial glutamine metabolism by mediating mono ADP-ribosylation of GLUD1: expressed in response to DNA damage and negatively regulates anaplerosis by inhibiting GLUD1, leading to block metabolism of glutamine into tricarboxylic acid cycle and promoting cell cycle arrest. In response to mTORC1 signal, SIRT4 expression is repressed, promoting anaplerosis and cell proliferation. Acts as a tumor suppressor. Also acts as a NAD-dependent protein deacetylase: mediates deacetylation of 'Lys-471' of MLYCD, inhibiting its activity, thereby acting as a regulator of lipid homeostasis. Does not seem to deacetylate PC. Controls fatty acid oxidation by inhibiting PPARA transcriptional activation. Impairs SIRT1-PPARA interaction probably through the regulation of NAD(+) levels. Down-regulates insulin secretion. The protein is NAD-dependent protein lipoamidase sirtuin-4, mitochondrial of Bos taurus (Bovine).